A 501-amino-acid chain; its full sequence is Cytochrome P450 2J6 (501 aa).

Cys-447 contacts heme.

It belongs to the cytochrome P450 family. The cofactor is heme.

It localises to the endoplasmic reticulum membrane. The protein resides in the microsome membrane. It carries out the reaction an organic molecule + reduced [NADPH--hemoprotein reductase] + O2 = an alcohol + oxidized [NADPH--hemoprotein reductase] + H2O + H(+). The chain is Cytochrome P450 2J6 (Cyp2j6) from Mus musculus (Mouse).